Here is a 535-residue protein sequence, read N- to C-terminus: Dual specificity calcium/calmodulin-dependent 3',5'-cyclic nucleotide phosphodiesterase 1B (535 aa).

A disordered region spans residues 1-21 (MELSPRSPPEMLESDCPSPLE). Residues Ser-7 and Ser-14 each carry the phosphoserine modification. 2 calmodulin-binding regions span residues 27–47 (SKKMWIKLRSLLRYMVKQLEN) and 117–140 (EKPKFRSIVHAVQAGIFVERMFRR). One can recognise a PDEase domain in the interval 145-502 (VGPTYSTAVH…QKWKERAASG (358 aa)). His-222 (proton donor) is an active-site residue. The Zn(2+) site is built by His-226, His-262, Asp-263, and Asp-369. Asp-263 contributes to the Mg(2+) binding site. Disordered stretches follow at residues 445–474 (PLTDDDSKSKSQPSFQWRQPSLDVDVGDPN) and 495–535 (WKER…GNLD). Positions 454–463 (KSQPSFQWRQ) are enriched in polar residues. Phosphoserine is present on residues Ser-465 and Ser-513.

This sequence belongs to the cyclic nucleotide phosphodiesterase family. PDE1 subfamily. Homodimer. The cofactor is Zn(2+). Requires Mg(2+) as cofactor. Expressed in brain.

It is found in the cytoplasm. Its subcellular location is the cytosol. It catalyses the reaction a nucleoside 3',5'-cyclic phosphate + H2O = a nucleoside 5'-phosphate + H(+). It carries out the reaction 3',5'-cyclic GMP + H2O = GMP + H(+). The enzyme catalyses 3',5'-cyclic AMP + H2O = AMP + H(+). Its activity is regulated as follows. Type I PDE are activated by the binding of calmodulin in the presence of Ca(2+). Its function is as follows. Cyclic nucleotide phosphodiesterase with a dual specificity for the second messengers cAMP and cGMP, which are key regulators of many important physiological processes. Has a preference for cGMP as a substrate. The sequence is that of Dual specificity calcium/calmodulin-dependent 3',5'-cyclic nucleotide phosphodiesterase 1B from Rattus norvegicus (Rat).